The primary structure comprises 369 residues: 1-aminocyclopropane-1-carboxylate oxidase homolog 2 (369 aa).

Positions lysine 217–histidine 318 constitute a Fe2OG dioxygenase domain. Residues histidine 241, aspartate 243, and histidine 297 each contribute to the Fe cation site.

Belongs to the iron/ascorbate-dependent oxidoreductase family. Requires Fe cation as cofactor.

This is 1-aminocyclopropane-1-carboxylate oxidase homolog 2 from Arabidopsis thaliana (Mouse-ear cress).